A 500-amino-acid chain; its full sequence is Lariat debranching enzyme (500 aa).

Positions 1–25 (MSSKNPVDEQPCCGSHEGSHQDPAP) are disordered. Positions 48, 50, 79, and 124 each coordinate a divalent metal cation. The segment at 164–194 (SGIFSQGDFQFSHYERPSFSERDVKSAYHVR) is lariat recognition loop. A divalent metal cation is bound by residues histidine 222, histidine 274, and histidine 276. Positions 453–500 (DDANAKPNQDDVDFGDEDFVIDRGHTSDEPEAKKSRLDEDKFEAVPSE) are disordered. Residues 462-471 (DDVDFGDEDF) are compositionally biased toward acidic residues. A compositionally biased stretch (basic and acidic residues) spans 472-500 (VIDRGHTSDEPEAKKSRLDEDKFEAVPSE).

Belongs to the lariat debranching enzyme family. Fe(2+) is required as a cofactor. Zn(2+) serves as cofactor. Requires Mn(2+) as cofactor.

The protein resides in the nucleus. With respect to regulation, active in presence of diverse metals including Fe(2+), Zn(2+), Mn(2+). Binds two metal cations in two adjacent alpha and beta metal-binding pockets. Its function is as follows. Cleaves the 2'-5' phosphodiester linkage at the branch point of lariat intron pre-mRNAs after splicing and converts them into linear molecules that are subsequently degraded. It thereby facilitates ribonucleotide turnover. The polypeptide is Lariat debranching enzyme (Caenorhabditis elegans).